The chain runs to 92 residues: MANTPSAKKRAKQAEKRRSHNASLRSMVRTYIKNVVKAIDTKDAEKAQAAYVLAVPVIDRMADKGIIHKNKAARHKSRLNGHIKALSVPAAA.

A disordered region spans residues 1-23 (MANTPSAKKRAKQAEKRRSHNAS). The span at 7–20 (AKKRAKQAEKRRSH) shows a compositional bias: basic residues.

This sequence belongs to the bacterial ribosomal protein bS20 family.

In terms of biological role, binds directly to 16S ribosomal RNA. This is Small ribosomal subunit protein bS20 from Pseudomonas fluorescens (strain SBW25).